The sequence spans 257 residues: Leucine-rich repeat-containing protein 3 (257 aa).

A signal peptide spans 1 to 32 (MGTVRPPRPSLLLVSTRESCLFLLFCLHLGAA). The LRRNT domain maps to 33 to 64 (CPQPCRCPDHAGAVAVFCSLRGLQEVPEDIPA). 4 LRR repeats span residues 65–86 (NTVLLKLDANKISHLPDGAFQH), 89–110 (RLRELDLSHNAIEAIGSATFAG), 114–135 (GLRLLDLSYNRIQRIPKDALGK), and 136–157 (LSAKIRLSHNPLHCECALQEAL). Residues 205–225 (VAMLVTMFGWFAMVIAYVVYY) form a helical membrane-spanning segment.

The protein belongs to the LRRC3 family. Widely expressed; detected in testis, lung, small intestine, breast, brain, heart, bone marrow, placenta, colon, fetal brain, liver, fetal liver, thymus, salivary gland, spinal cord, spleen, trachea and adrenal gland.

The protein localises to the membrane. In Homo sapiens (Human), this protein is Leucine-rich repeat-containing protein 3 (LRRC3).